Consider the following 558-residue polypeptide: Nuclear speckle splicing regulatory protein 1 (558 aa).

Positions 21-54 (PVLQKPSVFGNDSDDDDETSVSESLQREAAKKQA) are disordered. Residues S27 and S33 each carry the phosphoserine modification. Residues 104-170 (IHNLLKAVEI…REKRAAALEA (67 aa)) adopt a coiled-coil conformation. Positions 106-170 (NLLKAVEIRK…REKRAAALEA (65 aa)) are necessary for alternative splicing activity. Residues K199 and K210 each participate in a glycyl lysine isopeptide (Lys-Gly) (interchain with G-Cter in SUMO2) cross-link. Over residues 204–215 (EARSGIKEEKSR) the composition is skewed to basic and acidic residues. The segment at 204 to 534 (EARSGIKEEK…KRNNEETVMS (331 aa)) is disordered. Over residues 216–226 (GFSNEVSSKNR) the composition is skewed to polar residues. 3 positions are modified to phosphoserine: S248, S254, and S255. Residues 250–280 (FDAKSSADDEIEETRVNCRREKVIETPENDF) show a composition bias toward basic and acidic residues. Position 275 is a phosphothreonine (T275). A Glycyl lysine isopeptide (Lys-Gly) (interchain with G-Cter in SUMO2) cross-link involves residue K281. Basic residues predominate over residues 299–310 (STRHHTKGSRTS). 3 stretches are compositionally biased toward basic and acidic residues: residues 311–442 (RGHE…KREV), 449–487 (RNQD…RNQE), and 501–517 (RLTE…ERPP). Residues 379-427 (KREKDREKYSQREQERDRQQNDQNRPSEKGEKEEKSKAKEEHMKVRKER) adopt a coiled-coil conformation. S457 bears the Phosphoserine mark.

The protein belongs to the NSRP1 family. As to quaternary structure, interacts (via C-terminus) with SRSF1. Interacts (via C-terminus) with SRSF2. In terms of tissue distribution, expressed in dendritic cells, T-cells, B-cells and natural killer cells. Expressed in secondary lymphoid organs such as spleen and mesenteric, axillary and brachial lymph nodes.

It is found in the nucleus. Its subcellular location is the nucleus speckle. RNA-binding protein that mediates pre-mRNA alternative splicing regulation. The polypeptide is Nuclear speckle splicing regulatory protein 1 (NSRP1) (Homo sapiens (Human)).